Here is a 79-residue protein sequence, read N- to C-terminus: Hematopoietic cell signal transducer (79 aa).

The signal sequence occupies residues 1–18 (MAPPGGILFLLLLPVAAA). Residues 19–35 (QVTSGSCSGCGPLSLPL) lie on the Extracellular side of the membrane. A helical membrane pass occupies residues 36 to 56 (LAGLVAADAVVSLLIVVGVFV). Topologically, residues 57–79 (CGRPRSRPTQEDGKIYINMPGRG) are cytoplasmic. Position 72 is a phosphotyrosine (Y72). Residues 72–74 (YIN) form a GRB2 binding site region. The PIK3R1 binding site stretch occupies residues 72–75 (YINM).

This sequence belongs to the DAP10 family. In terms of assembly, homodimer; Disulfide-linked. Heterohexamer composed of four subunits of HCST/DAP10 and two subunits of KLRK1. Interacts (via transmembrane domain) with KLRK1 (via transmembrane domain); the interaction is required for KLRK1 NK cell surface and induces NK cell-mediated cytotoxicity. Interacts with PIK3R1 and GRB2. Interacts with CLEC5A. Forms an CLEC5A/TYROBP/HCST trimolecular complex depending almost solely on TYROBP. Interacts with KLRK1. Interacts with CD300H. Post-translationally, phosphorylated; PIK3R1 and GRB2 associate specifically with tyrosine-phosphorylated HCST. O-glycosylated. As to expression, expressed predominantly in lymphohematopoietic tissues.

The protein localises to the membrane. Transmembrane adapter protein which associates with KLRK1 to form an activation receptor KLRK1-HCST in lymphoid and myeloid cells; this receptor plays a major role in triggering cytotoxicity against target cells expressing cell surface ligands such as MHC class I chain-related MICA and MICB, and UL16-binding proteins (ULBPs); these ligands are up-regulated by stress conditions and pathological state such as viral infection and tumor transformation. Functions as a docking site for PI3-kinase PIK3R1 and GRB2. Interaction of ULBPs with KLRK1-HCST triggers calcium mobilization and activation of the PIK3R1, MAP2K/ERK, and JAK2/STAT5 signaling pathways. Both PIK3R1 and GRB2 are required for full KLRK1-HCST-mediated activation and ultimate killing of target cells. In NK cells, KLRK1-HCST signaling directly induces cytotoxicity and enhances cytokine production initiated via DAP12/TYROBP-associated receptors. In T-cells, it provides primarily costimulation for TCR-induced signals. KLRK1-HCST receptor plays a role in immune surveillance against tumors and is required for cytolysis of tumors cells; indeed, melanoma cells that do not express KLRK1 ligands escape from immune surveillance mediated by NK cells. This is Hematopoietic cell signal transducer (HCST) from Sus scrofa (Pig).